The sequence spans 261 residues: 1-(5-phosphoribosyl)-5-[(5-phosphoribosylamino)methylideneamino] imidazole-4-carboxamide isomerase (261 aa).

It belongs to the HisA/HisF family.

It is found in the cytoplasm. The enzyme catalyses 1-(5-phospho-beta-D-ribosyl)-5-[(5-phospho-beta-D-ribosylamino)methylideneamino]imidazole-4-carboxamide = 5-[(5-phospho-1-deoxy-D-ribulos-1-ylimino)methylamino]-1-(5-phospho-beta-D-ribosyl)imidazole-4-carboxamide. The protein operates within amino-acid biosynthesis; L-histidine biosynthesis; L-histidine from 5-phospho-alpha-D-ribose 1-diphosphate: step 4/9. In terms of biological role, catalyzes the isomerization of the aminoaldose moiety of ProFAR to the aminoketose of PRFAR. This is 1-(5-phosphoribosyl)-5-[(5-phosphoribosylamino)methylideneamino] imidazole-4-carboxamide isomerase from Saccharomyces cerevisiae (strain ATCC 204508 / S288c) (Baker's yeast).